The chain runs to 200 residues: NAD(P)H-dependent FMN reductase C4B3.06c (200 aa).

FMN is bound by residues arginine 22, 96–99, and tyrosine 126; that span reads QYNG.

In terms of assembly, homodimer.

It localises to the cytoplasm. The protein resides in the nucleus. The catalysed reaction is FMNH2 + NADP(+) = FMN + NADPH + 2 H(+). The enzyme catalyses FMNH2 + NAD(+) = FMN + NADH + 2 H(+). In terms of biological role, has several reductase activities that are NAD(P)H-dependent and involve FMN as a cofactor. May be involved in ferric iron assimilation. This Schizosaccharomyces pombe (strain 972 / ATCC 24843) (Fission yeast) protein is NAD(P)H-dependent FMN reductase C4B3.06c.